The sequence spans 347 residues: Phenylalanine--tRNA ligase alpha subunit (347 aa).

Glutamate 261 serves as a coordination point for Mg(2+).

Belongs to the class-II aminoacyl-tRNA synthetase family. Phe-tRNA synthetase alpha subunit type 1 subfamily. In terms of assembly, tetramer of two alpha and two beta subunits. Mg(2+) serves as cofactor.

Its subcellular location is the cytoplasm. The catalysed reaction is tRNA(Phe) + L-phenylalanine + ATP = L-phenylalanyl-tRNA(Phe) + AMP + diphosphate + H(+). This Streptococcus thermophilus (strain ATCC BAA-491 / LMD-9) protein is Phenylalanine--tRNA ligase alpha subunit.